The primary structure comprises 162 residues: SsrA-binding protein (162 aa).

Belongs to the SmpB family.

The protein resides in the cytoplasm. Functionally, required for rescue of stalled ribosomes mediated by trans-translation. Binds to transfer-messenger RNA (tmRNA), required for stable association of tmRNA with ribosomes. tmRNA and SmpB together mimic tRNA shape, replacing the anticodon stem-loop with SmpB. tmRNA is encoded by the ssrA gene; the 2 termini fold to resemble tRNA(Ala) and it encodes a 'tag peptide', a short internal open reading frame. During trans-translation Ala-aminoacylated tmRNA acts like a tRNA, entering the A-site of stalled ribosomes, displacing the stalled mRNA. The ribosome then switches to translate the ORF on the tmRNA; the nascent peptide is terminated with the 'tag peptide' encoded by the tmRNA and targeted for degradation. The ribosome is freed to recommence translation, which seems to be the essential function of trans-translation. In Shewanella frigidimarina (strain NCIMB 400), this protein is SsrA-binding protein.